The primary structure comprises 491 residues: UDP-N-acetylmuramate--L-alanine ligase (491 aa).

126 to 132 (GTHGKTT) contacts ATP.

It belongs to the MurCDEF family.

It is found in the cytoplasm. It catalyses the reaction UDP-N-acetyl-alpha-D-muramate + L-alanine + ATP = UDP-N-acetyl-alpha-D-muramoyl-L-alanine + ADP + phosphate + H(+). It participates in cell wall biogenesis; peptidoglycan biosynthesis. Cell wall formation. The chain is UDP-N-acetylmuramate--L-alanine ligase from Salmonella paratyphi C (strain RKS4594).